We begin with the raw amino-acid sequence, 170 residues long: Shikimate kinase (170 aa).

11–16 (LSGKST) serves as a coordination point for ATP. S15 is a Mg(2+) binding site. Substrate-binding residues include D33, R57, and G79. Residue R119 participates in ATP binding. Residue R137 participates in substrate binding.

This sequence belongs to the shikimate kinase family. In terms of assembly, monomer. Mg(2+) is required as a cofactor.

The protein resides in the cytoplasm. The enzyme catalyses shikimate + ATP = 3-phosphoshikimate + ADP + H(+). Its pathway is metabolic intermediate biosynthesis; chorismate biosynthesis; chorismate from D-erythrose 4-phosphate and phosphoenolpyruvate: step 5/7. Functionally, catalyzes the specific phosphorylation of the 3-hydroxyl group of shikimic acid using ATP as a cosubstrate. The sequence is that of Shikimate kinase from Clostridium botulinum (strain Langeland / NCTC 10281 / Type F).